Reading from the N-terminus, the 286-residue chain is Oxidase hkm6 (286 aa).

Residues His-16, His-25, and His-215 each contribute to the Cu cation site.

This sequence belongs to the tyrosinase family. Cu(2+) serves as cofactor.

The protein operates within secondary metabolite biosynthesis. Oxidase; part of the gene cluster that mediates the biosynthesis of hancockiamides, an unusual new family of N-cinnamoylated piperazines. The NRPS hkm10 and the NmrA-like reductase hkm9 are proposed to convert two molecules of L-Phe to the intermediary piperazine called xenocockiamide A. Xenocockiamide A is then converted to hancockiamide D via a series of hydroxylations and O-methylations. The tyrosinase hkm6 may catalyze an aromatic hydroxylation, then the 2-oxoglutarate-dependent Fe(II) dioxygenase hkm4 and the FAD-dependent phenol hydroxylase hkm7 may catalyze consecutive hydroxylations to install 2 more hydroxy groups, and the methyltransferase hkm8 probably catalyzes two methylations using 2 molecules of S-adenosyl-L-methionine (SAM). The NRPS hkm11 activates and transfers trans-cinnamate supplied by the PAL hkm12 to hancockiamide D and produces hancockiamide A. NRPS Hkm11 has the flexibility to tolerate the bulky hancockiamide G as a substrate and the absence of the acetyl-transferase hkm3 opens up the opportunity for hkm11 to introduce a second N-cinnamoyl moiety. The cytochrome P450 monooxygenase hkm5 catalyzes the methylenedioxy bridge formation, converting hancockiamide A into hancockiamide G. Hkm5 can also convert hancockiamide B into hancockiamide C, and hancockiamide D into hancockiamide H. The N-acetyltransferase hkm3 finally transfers an acetyl group to 1-N of piperazine, converting hancockiamide A into hancockiamide B and hancockiamide G into hancockiamide C. In Aspergillus hancockii, this protein is Oxidase hkm6.